The following is a 493-amino-acid chain: D-glyceraldehyde dehydrogenase (NADP(+)) (493 aa).

Residues 144–147 (TPWN), Arg155, 170–174 (KPSSD), 202–208 (KGSEIGD), 223–246 (GSTS…ILEL), Cys279, and 379–381 (EIF) each bind NADP(+). Positions 147 and 155 each coordinate substrate. Catalysis depends on Glu245, which acts as the Proton acceptor. Substrate is bound at residue Cys279. Cys279 functions as the Proton donor in the catalytic mechanism.

Belongs to the aldehyde dehydrogenase family. Glyceraldehyde dehydrogenase subfamily. As to quaternary structure, homotetramer. Dimer of dimers.

The catalysed reaction is D-glyceraldehyde + NADP(+) + H2O = (R)-glycerate + NADPH + 2 H(+). The protein operates within carbohydrate degradation; glycolysis. Stable for 2 hours at 60 degrees Celsius but activity is decreased to less than 50 percent within 15 minutes at 70 degrees Celsius. NADP-dependent dehydrogenase of the nED (non-phosphorylated Entner-Doudoroff) pathway with highest activity towards glyceraldehydes (e.g. D,L-glyceraldehyde and D-glyceraldehyde), to a lesser extent towards D,L-glyceraldehyde-3-phosphate and glycolaldehyde, but no activity towards aliphatic or aromatic aldehydes. The protein is D-glyceraldehyde dehydrogenase (NADP(+)) of Picrophilus torridus (strain ATCC 700027 / DSM 9790 / JCM 10055 / NBRC 100828 / KAW 2/3).